We begin with the raw amino-acid sequence, 402 residues long: Multidrug resistance protein MdtH (402 aa).

11 helical membrane passes run 13–33, 34–54, 99–116, 139–159, 165–185, 214–234, 243–263, 277–297, 300–320, 340–360, and 368–388; these read YFLLVDNMLVVLGFFVVFPLI, SIRFVDQMGWAALMVGIALGL, PWVLWLSCILSGLGGTLF, LLMMQDSAGAVIGALLGSWLL, LVCSAGAALFIACAAFNAWYL, VLTLTGYYMLAVQVMLMLPIM, AAVKWMYAIEATISLTLLYPI, LMAGLLVMTLAMLPIGMTSSL, LFTLICLFYIGSIIAEPARET, LGLAFGGALGYAGGGWLFDAG, and LPWLMLGAIGFITFLALWWQF.

It belongs to the major facilitator superfamily. DHA1 family. MdtH (TC 2.A.1.2.21) subfamily.

It localises to the cell inner membrane. This chain is Multidrug resistance protein MdtH, found in Klebsiella pneumoniae (strain 342).